Here is a 168-residue protein sequence, read N- to C-terminus: Cell division inhibitor SulA (168 aa).

The segment at 106 to 112 is ftsZ binding; it reads ALLTGNY. The lon protease binding stretch occupies residues 161-168; the sequence is KIHSYLYH.

It belongs to the SulA family. Interacts with FtsZ. Is rapidly cleaved and degraded by the Lon protease once DNA damage is repaired.

Its function is as follows. Component of the SOS system and an inhibitor of cell division. Accumulation of SulA causes rapid cessation of cell division and the appearance of long, non-septate filaments. In the presence of GTP, binds a polymerization-competent form of FtsZ in a 1:1 ratio, thus inhibiting FtsZ polymerization and therefore preventing it from participating in the assembly of the Z ring. This mechanism prevents the premature segregation of damaged DNA to daughter cells during cell division. This chain is Cell division inhibitor SulA, found in Yersinia pseudotuberculosis serotype O:1b (strain IP 31758).